A 404-amino-acid chain; its full sequence is Argininosuccinate synthase (404 aa).

Residues 10–18 (AYSGGVDTS) and Ala-38 contribute to the ATP site. Position 89 (Tyr-89) interacts with L-citrulline. Gly-119 lines the ATP pocket. The L-aspartate site is built by Thr-121, Asn-125, and Asp-126. L-citrulline is bound at residue Asn-125. L-citrulline-binding residues include Arg-129, Ser-177, Ser-186, Glu-262, and Tyr-274.

It belongs to the argininosuccinate synthase family. Type 1 subfamily. In terms of assembly, homotetramer.

It localises to the cytoplasm. It carries out the reaction L-citrulline + L-aspartate + ATP = 2-(N(omega)-L-arginino)succinate + AMP + diphosphate + H(+). It participates in amino-acid biosynthesis; L-arginine biosynthesis; L-arginine from L-ornithine and carbamoyl phosphate: step 2/3. This Prochlorococcus marinus (strain AS9601) protein is Argininosuccinate synthase.